A 249-amino-acid polypeptide reads, in one-letter code: Dof zinc finger protein DOF4.5 (249 aa).

Residues 25 to 79 (RVCARCDSDNTKFCYYNNYCEFQPRYFCKNCRRYWTHGGALRNIPIGGSSRAKRA) form a Dof-type zinc finger. Residues Cys-27, Cys-30, Cys-52, and Cys-55 each contribute to the Zn(2+) site.

It is found in the nucleus. Its function is as follows. Transcription factor that binds specifically to a 5'-AA[AG]G-3' consensus core sequence. The sequence is that of Dof zinc finger protein DOF4.5 (DOF4.5) from Arabidopsis thaliana (Mouse-ear cress).